We begin with the raw amino-acid sequence, 400 residues long: Nucleoside permease NupC (400 aa).

Residues 1–3 are Cytoplasmic-facing; it reads MDR. The helical transmembrane segment at 4-24 threads the bilayer; it reads VLHFVLALAVVAILALLVSSD. The Periplasmic segment spans residues 25 to 36; the sequence is RKKIRIRYVIQL. A helical membrane pass occupies residues 37 to 57; it reads LVIEVLLAWFFLNSDVGLGFV. Over 58 to 86 the chain is Cytoplasmic; the sequence is KGFSEMFEKLLGFANEGTNFVFGSMNDQG. A helical transmembrane segment spans residues 87 to 107; that stretch reads LAFFFLKVLCPIVFISALIGI. At 108–168 the chain is on the periplasmic side; it reads LQHIRVLPVI…GKISRNRMYT (61 aa). Residues 169 to 189 traverse the membrane as a helical segment; sequence MAATAMSTVSMSIVGAYMTML. At 190 to 192 the chain is on the cytoplasmic side; the sequence is EPK. Residues 193–213 form a helical membrane-spanning segment; the sequence is YVVAALVLNMFSTFIVLSLIN. The Periplasmic portion of the chain corresponds to 214–250; the sequence is PYRVDASEENIQMSNLHEGQSFFEMLGEYILAGFKVA. The chain crosses the membrane as a helical span at residues 251–271; sequence IIVAAMLIGFIALIAALNALF. The Cytoplasmic segment spans residues 272 to 281; that stretch reads ATVTGWFGYS. The helical transmembrane segment at 282–302 threads the bilayer; sequence ISFQGILGYIFYPIAWVMGVP. At 303-341 the chain is on the periplasmic side; sequence SSEALQVGSIMATKLVSNEFVAMMDLQKIASTLSPRAEG. A helical membrane pass occupies residues 342–362; the sequence is IISVFLVSFANFSSIGIIAGA. At 363 to 378 the chain is on the cytoplasmic side; sequence VKGLNEEQGNVVSRFG. Residues 379–399 form a helical membrane-spanning segment; that stretch reads LKLVYGSTLVSVLSASIAALV. Position 400 (Leu400) is a topological domain, periplasmic.

It belongs to the concentrative nucleoside transporter (CNT) (TC 2.A.41) family.

The protein resides in the cell inner membrane. The enzyme catalyses adenosine(in) + H(+)(in) = adenosine(out) + H(+)(out). It carries out the reaction uridine(in) + H(+)(in) = uridine(out) + H(+)(out). It catalyses the reaction thymidine(in) + H(+)(in) = thymidine(out) + H(+)(out). The catalysed reaction is cytidine(in) + H(+)(in) = cytidine(out) + H(+)(out). The enzyme catalyses 2'-deoxycytidine(in) + H(+)(in) = 2'-deoxycytidine(out) + H(+)(out). Its activity is regulated as follows. Transport is inhibited by the proton uncoupler dinitrophenol. Inhibited by the nucleoside antibiotic showdomycin. Functionally, nucleoside transport protein that can transport adenosine, uridine, thymidine, cytidine and deoxycytidine. Shows weak activity with inosine and xanthosine. Transport is driven by a proton motive force. Does not transport guanosine, deoxyguanosine, hypoxanthine or uracil. Also shows activity with the chemotherapeutic drugs 3'-azido-3'-deoxythymidine (AZT), 2',3'- dideoxycytidine (ddC) and 2'-deoxy-2',2'-difluorocytidine (gemcitabine). The sequence is that of Nucleoside permease NupC from Escherichia coli (strain K12).